Reading from the N-terminus, the 356-residue chain is Probable dual-specificity RNA methyltransferase RlmN (356 aa).

Glu97 serves as the catalytic Proton acceptor. Residues 103–333 (YHHGNSVCIS…VTIRREMGSD (231 aa)) enclose the Radical SAM core domain. Cys110 and Cys338 are oxidised to a cystine. [4Fe-4S] cluster is bound by residues Cys117, Cys121, and Cys124. S-adenosyl-L-methionine is bound by residues 164 to 165 (GE), Ser196, 219 to 221 (SLH), and Asn295. The active-site S-methylcysteine intermediate is the Cys338.

Belongs to the radical SAM superfamily. RlmN family. [4Fe-4S] cluster is required as a cofactor.

The protein localises to the cytoplasm. The enzyme catalyses adenosine(2503) in 23S rRNA + 2 reduced [2Fe-2S]-[ferredoxin] + 2 S-adenosyl-L-methionine = 2-methyladenosine(2503) in 23S rRNA + 5'-deoxyadenosine + L-methionine + 2 oxidized [2Fe-2S]-[ferredoxin] + S-adenosyl-L-homocysteine. It carries out the reaction adenosine(37) in tRNA + 2 reduced [2Fe-2S]-[ferredoxin] + 2 S-adenosyl-L-methionine = 2-methyladenosine(37) in tRNA + 5'-deoxyadenosine + L-methionine + 2 oxidized [2Fe-2S]-[ferredoxin] + S-adenosyl-L-homocysteine. Its function is as follows. Specifically methylates position 2 of adenine 2503 in 23S rRNA and position 2 of adenine 37 in tRNAs. In Lachnoclostridium phytofermentans (strain ATCC 700394 / DSM 18823 / ISDg) (Clostridium phytofermentans), this protein is Probable dual-specificity RNA methyltransferase RlmN.